A 432-amino-acid polypeptide reads, in one-letter code: Histidine--tRNA ligase (432 aa).

This sequence belongs to the class-II aminoacyl-tRNA synthetase family. Homodimer.

The protein localises to the cytoplasm. The enzyme catalyses tRNA(His) + L-histidine + ATP = L-histidyl-tRNA(His) + AMP + diphosphate + H(+). The chain is Histidine--tRNA ligase from Symbiobacterium thermophilum (strain DSM 24528 / JCM 14929 / IAM 14863 / T).